A 345-amino-acid chain; its full sequence is KRR1 small subunit processome component homolog (345 aa).

Residues 125-193 (DIIKIGNLVH…VRDIVLETMN (69 aa)) enclose the KH domain. A compositionally biased stretch (basic residues) spans 232–245 (NISKRKQPKVKKQK). Disordered regions lie at residues 232–260 (NISKRKQPKVKKQKKEYTPFPPSQPESKV) and 273–329 (QEQK…VDVK). Residues 270 to 298 (FLNQEQKQAKRNQERTEKQKEAAKRQDER) adopt a coiled-coil conformation. 2 stretches are compositionally biased toward basic and acidic residues: residues 276–302 (KQAKRNQERTEKQKEAAKRQDERRNKD) and 315–329 (LKKEDGFSSSKVDVK).

This sequence belongs to the KRR1 family. As to quaternary structure, monomer. Component of the ribosomal small subunit (SSU) processome.

It is found in the nucleus. Its subcellular location is the nucleolus. Its function is as follows. Required for 40S ribosome biogenesis. Involved in nucleolar processing of pre-18S ribosomal RNA and ribosome assembly. Binds to RNA. Required for female germline development, cell viability during eye development and for survival of dividing cells and epithelial cells during early wing disk development. This Drosophila erecta (Fruit fly) protein is KRR1 small subunit processome component homolog.